The primary structure comprises 418 residues: Serum response factor homolog A (418 aa).

Disordered stretches follow at residues 14–67, 144–170, 301–351, and 388–418; these read LGNV…GKKA, CLNT…LLQQ, RLGK…NNNS, and SSSS…FPPC. Composition is skewed to low complexity over residues 22 to 39 and 51 to 61; these read PSSP…PTST and TSEPSSPSTGE. An MADS-box domain is found at 67–127; the sequence is AGRRKIKIEF…GHVYTFATAK (61 aa). Composition is skewed to low complexity over residues 150-170, 306-351, and 388-399; these read NPNS…LLQQ, NNNN…NNNS, and SSSSASSSPASP. Positions 400 to 418 are enriched in polar residues; that stretch reads NQFNYSNHSMPLNNQFPPC.

The protein resides in the nucleus. Its function is as follows. Required for proper slug migration, spore differentiation and stalk differentiation (under nonbuffered conditions). Could be involved in late events of spore maturation necessary for spore stability. The sequence is that of Serum response factor homolog A (srfA) from Dictyostelium discoideum (Social amoeba).